The chain runs to 408 residues: BRCA1-A complex subunit Abraxas 1 (408 aa).

The 149-residue stretch at 7–155 (TAVMSGFVFG…KSTHRLEYAL (149 aa)) folds into the MPN domain. A coiled-coil region spans residues 210–273 (ALAEVNRISN…EETGNKVSEA (64 aa)). The span at 360-372 (LQLQKQHSQNGDS) shows a compositional bias: polar residues. Positions 360–408 (LQLQKQHSQNGDSEGSDSERPLCNSGTETDGDILESLHMDVSRSKSPIF) are disordered. The residue at position 405 (serine 405) is a Phosphoserine. Positions 405 to 408 (SPIF) match the pSXXF motif motif.

The protein belongs to the FAM175 family. Abraxas subfamily. Component of the BRCA1-A complex. Component of the BRISC complex. Interacts directly (when phosphorylated at Ser-405) with brca1. Homodimer. The phosphorylated homodimer can interact directly with two brca1 chains, giving rise to a heterotetramer. Phosphorylation of Ser-405 of the pSXXF motif by ATM or ATR constitutes a specific recognition motif for the BRCT domain of BRCA1.

It is found in the nucleus. Its function is as follows. Involved in DNA damage response and double-strand break (DSB) repair. Component of the BRCA1-A complex, acting as a central scaffold protein that assembles the various components of the complex and mediates the recruitment of brca1. The BRCA1-A complex specifically recognizes 'Lys-63'-linked ubiquitinated histones H2A and H2AX at DNA lesion sites, leading to target the brca1-bard1 heterodimer to sites of DNA damage at DSBs. This complex also possesses deubiquitinase activity that specifically removes 'Lys-63'-linked ubiquitin on histones H2A and H2AX. This is BRCA1-A complex subunit Abraxas 1 from Xenopus tropicalis (Western clawed frog).